The primary structure comprises 429 residues: MFS-type efflux pump MSMEG_3705 (429 aa).

12 consecutive transmembrane segments (helical) span residues 21-41 (AWAA…DRFL), 59-79 (AIGV…GIAV), 86-106 (GAFG…TMLG), 115-137 (LALT…HAYV), 150-170 (LAVI…GGGL), 181-201 (FVIM…VVGV), 228-248 (FLIV…LTTF), 264-284 (VGVE…LIVG), 299-319 (LWIV…AFVV), 327-347 (LFLA…IAAI), 361-381 (AMFL…VGML), and 397-417 (ALLL…WLAS).

Belongs to the major facilitator superfamily.

It localises to the cell inner membrane. Probably plays a role in bacterial growth and resistance to antibiotics. In Mycolicibacterium smegmatis (strain ATCC 700084 / mc(2)155) (Mycobacterium smegmatis), this protein is MFS-type efflux pump MSMEG_3705.